The primary structure comprises 151 residues: Ubiquitin-like protein 4A-B (151 aa).

The Ubiquitin-like domain maps to 1 to 76; sequence MILTIKPLKG…LNLVVRPAGE (76 aa).

In terms of assembly, component of the BAT3 complex.

The protein localises to the cytoplasm. The protein resides in the cytosol. Its function is as follows. Component of the BAT3 complex, a multiprotein complex involved in the post-translational delivery of tail-anchored (TA) membrane proteins to the endoplasmic reticulum membrane. TA membrane proteins, also named type II transmembrane proteins, contain a single C-terminal transmembrane region. The chain is Ubiquitin-like protein 4A-B (ubl4ab) from Oncorhynchus mykiss (Rainbow trout).